We begin with the raw amino-acid sequence, 130 residues long: Small ribosomal subunit protein uS9 (130 aa).

Belongs to the universal ribosomal protein uS9 family.

This Delftia acidovorans (strain DSM 14801 / SPH-1) protein is Small ribosomal subunit protein uS9.